Here is a 157-residue protein sequence, read N- to C-terminus: Ribosome-binding factor A (157 aa).

The interval glutamine 127 to aspartate 157 is disordered. A compositionally biased stretch (acidic residues) spans alanine 135–aspartate 157.

The protein belongs to the RbfA family. In terms of assembly, monomer. Binds 30S ribosomal subunits, but not 50S ribosomal subunits or 70S ribosomes.

The protein resides in the cytoplasm. Functionally, one of several proteins that assist in the late maturation steps of the functional core of the 30S ribosomal subunit. Associates with free 30S ribosomal subunits (but not with 30S subunits that are part of 70S ribosomes or polysomes). Required for efficient processing of 16S rRNA. May interact with the 5'-terminal helix region of 16S rRNA. The chain is Ribosome-binding factor A from Shewanella baltica (strain OS195).